Here is a 1495-residue protein sequence, read N- to C-terminus: ESX secretion system protein YukB (1495 aa).

Helical transmembrane passes span 246–266 (LWLVILPPLVMLIVMGVVAII) and 270–290 (GIFILVSLAMFMMTLITSTVQ). FtsK domains are found at residues 661-858 (KDDI…TDSK) and 993-1177 (QAPI…SEGY). ATP is bound by residues 682 to 689 (GTTGSGKS) and 1010 to 1017 (GSSGYGKS).

This sequence belongs to the EssC family.

It is found in the cell membrane. Required for YukE secretion. Probable component or regulator of the ESX/ESAT-6-like secretion system (BsEss). The sequence is that of ESX secretion system protein YukB (yukB) from Bacillus subtilis (strain 168).